The chain runs to 367 residues: uncharacterized protein (367 aa).

This sequence to M.tuberculosis Rv0502.

This is an uncharacterized protein from Mycobacterium leprae (strain TN).